The primary structure comprises 475 residues: Glutamate--tRNA ligase 2 (475 aa).

The 'HIGH' region signature appears at 11–21; sequence PSPTGFLHIGG. Positions 116-133 are enriched in basic and acidic residues; sequence AEGRPPRYDGTWRDKDPA. Residues 116–137 are disordered; it reads AEGRPPRYDGTWRDKDPAEAPS. The 'KMSKS' region signature appears at 240–244; the sequence is KLSKR. ATP is bound at residue Lys243.

It belongs to the class-I aminoacyl-tRNA synthetase family. Glutamate--tRNA ligase type 1 subfamily. Monomer.

The protein resides in the cytoplasm. The enzyme catalyses tRNA(Glu) + L-glutamate + ATP = L-glutamyl-tRNA(Glu) + AMP + diphosphate. Functionally, catalyzes the attachment of glutamate to tRNA(Glu) in a two-step reaction: glutamate is first activated by ATP to form Glu-AMP and then transferred to the acceptor end of tRNA(Glu). The polypeptide is Glutamate--tRNA ligase 2 (Chelativorans sp. (strain BNC1)).